Here is a 424-residue protein sequence, read N- to C-terminus: Serine--tRNA ligase (424 aa).

Residue 231-233 (TAE) participates in L-serine binding. Residue 262–264 (RAE) participates in ATP binding. Glutamate 285 lines the L-serine pocket. 349–352 (EISS) contacts ATP. L-serine is bound at residue serine 385.

The protein belongs to the class-II aminoacyl-tRNA synthetase family. Type-1 seryl-tRNA synthetase subfamily. In terms of assembly, homodimer. The tRNA molecule binds across the dimer.

It localises to the cytoplasm. It catalyses the reaction tRNA(Ser) + L-serine + ATP = L-seryl-tRNA(Ser) + AMP + diphosphate + H(+). It carries out the reaction tRNA(Sec) + L-serine + ATP = L-seryl-tRNA(Sec) + AMP + diphosphate + H(+). The protein operates within aminoacyl-tRNA biosynthesis; selenocysteinyl-tRNA(Sec) biosynthesis; L-seryl-tRNA(Sec) from L-serine and tRNA(Sec): step 1/1. Functionally, catalyzes the attachment of serine to tRNA(Ser). Is also able to aminoacylate tRNA(Sec) with serine, to form the misacylated tRNA L-seryl-tRNA(Sec), which will be further converted into selenocysteinyl-tRNA(Sec). This is Serine--tRNA ligase from Geobacillus sp. (strain WCH70).